The primary structure comprises 499 residues: Probable cytosol aminopeptidase (499 aa).

Residues Lys-263 and Asp-268 each coordinate Mn(2+). Residue Lys-275 is part of the active site. Residues Asp-286, Asp-345, and Glu-347 each contribute to the Mn(2+) site. Arg-349 is a catalytic residue.

This sequence belongs to the peptidase M17 family. Mn(2+) is required as a cofactor.

The protein localises to the cytoplasm. The catalysed reaction is Release of an N-terminal amino acid, Xaa-|-Yaa-, in which Xaa is preferably Leu, but may be other amino acids including Pro although not Arg or Lys, and Yaa may be Pro. Amino acid amides and methyl esters are also readily hydrolyzed, but rates on arylamides are exceedingly low.. It catalyses the reaction Release of an N-terminal amino acid, preferentially leucine, but not glutamic or aspartic acids.. In terms of biological role, presumably involved in the processing and regular turnover of intracellular proteins. Catalyzes the removal of unsubstituted N-terminal amino acids from various peptides. The chain is Probable cytosol aminopeptidase (pepA) from Chlamydia trachomatis serovar D (strain ATCC VR-885 / DSM 19411 / UW-3/Cx).